The primary structure comprises 234 residues: Arsenate respiratory reductase iron-sulfur subunit ArrB (234 aa).

4Fe-4S ferredoxin-type domains lie at 3–32, 48–79, and 80–109; these read LGMVIDLQKCVGCGGCSLACKTENNTNDGI, VKYTYIPTLCNHCDDAPCVKVCPTGAMHKDKR, and GLTLQNNDECIGCKKCMNACPYGVISFNAA. Cys-12, Cys-15, Cys-18, Cys-22, Cys-57, Cys-60, Cys-65, Cys-69, Cys-89, Cys-92, Cys-95, Cys-99, Cys-164, Cys-167, Cys-179, and Cys-183 together coordinate [4Fe-4S] cluster.

In terms of assembly, heterodimer composed of one large subunit (ArrA) and one small subunit (ArrB). Requires [4Fe-4S] cluster as cofactor.

It is found in the periplasm. Its activity is regulated as follows. Phosphate is a competitive inhibitor. Its function is as follows. Component of the arsenate respiratory reductase (Arr) complex, which catalyzes the reduction of arsenate (As(V)) to arsenite (As(III)). ArrB is probably the electron transfer subunit. The periplasmic localization of this complex may allow the cell to couple arsenate reduction to energy production before arsenate can be transported to the cell cytoplasm and enter the ars detoxification pathway, an energy-requiring process. In Shewanella sp. (strain ANA-3), this protein is Arsenate respiratory reductase iron-sulfur subunit ArrB.